The sequence spans 157 residues: uncharacterized protein (157 aa).

4 helical membrane passes run 29–49, 52–72, 93–113, and 117–137; these read LLIIPLLLLWGVSASFQPAYF, VLHVAISGILLLIGLACGFGI, LGSVILILVILSLRMAARTWL, and NEMFIAIIHSMFFVPLGTITA.

The protein localises to the cell membrane. This is an uncharacterized protein from Bacillus subtilis (strain 168).